The following is a 273-amino-acid chain: Dermonecrotic toxin LhSicTox-alphaIA2bii (273 aa).

Histidine 5 is an active-site residue. Mg(2+) contacts are provided by glutamate 25 and aspartate 27. Histidine 41 functions as the Nucleophile in the catalytic mechanism. Intrachain disulfides connect cysteine 45-cysteine 51 and cysteine 47-cysteine 190. Aspartate 85 serves as a coordination point for Mg(2+).

This sequence belongs to the arthropod phospholipase D family. Class II subfamily. Mg(2+) is required as a cofactor. In terms of tissue distribution, expressed by the venom gland.

It localises to the secreted. The catalysed reaction is an N-(acyl)-sphingosylphosphocholine = an N-(acyl)-sphingosyl-1,3-cyclic phosphate + choline. It carries out the reaction an N-(acyl)-sphingosylphosphoethanolamine = an N-(acyl)-sphingosyl-1,3-cyclic phosphate + ethanolamine. It catalyses the reaction a 1-acyl-sn-glycero-3-phosphocholine = a 1-acyl-sn-glycero-2,3-cyclic phosphate + choline. The enzyme catalyses a 1-acyl-sn-glycero-3-phosphoethanolamine = a 1-acyl-sn-glycero-2,3-cyclic phosphate + ethanolamine. In terms of biological role, dermonecrotic toxins cleave the phosphodiester linkage between the phosphate and headgroup of certain phospholipids (sphingolipid and lysolipid substrates), forming an alcohol (often choline) and a cyclic phosphate. This toxin acts on sphingomyelin (SM). It may also act on ceramide phosphoethanolamine (CPE), lysophosphatidylcholine (LPC) and lysophosphatidylethanolamine (LPE), but not on lysophosphatidylserine (LPS), and lysophosphatidylglycerol (LPG). It acts by transphosphatidylation, releasing exclusively cyclic phosphate products as second products. Induces dermonecrosis, hemolysis, increased vascular permeability, edema, inflammatory response, and platelet aggregation. This Loxosceles hirsuta (Recluse spider) protein is Dermonecrotic toxin LhSicTox-alphaIA2bii.